A 248-amino-acid chain; its full sequence is UPF0736 protein ABC2536 (248 aa).

Belongs to the UPF0736 family.

This chain is UPF0736 protein ABC2536, found in Shouchella clausii (strain KSM-K16) (Alkalihalobacillus clausii).